Here is a 145-residue protein sequence, read N- to C-terminus: RNA polymerase-binding transcription factor DksA (145 aa).

Positions 108, 111, 129, and 132 each coordinate Zn(2+). The dksA C4-type zinc-finger motif lies at Cys-108–Cys-132.

The protein belongs to the DksA family. In terms of assembly, interacts directly with the RNA polymerase.

Its subcellular location is the cytoplasm. In terms of biological role, transcription factor that acts by binding directly to the RNA polymerase (RNAP). Required for negative regulation of rRNA expression and positive regulation of several amino acid biosynthesis promoters. Also required for regulation of fis expression. The sequence is that of RNA polymerase-binding transcription factor DksA from Haemophilus influenzae (strain ATCC 51907 / DSM 11121 / KW20 / Rd).